Reading from the N-terminus, the 215-residue chain is Large ribosomal subunit protein uL3 (215 aa).

Residues 136 to 155 form a disordered region; it reads GVSISHRSHGSTGQRQDPGK. The residue at position 151 (Gln151) is an N5-methylglutamine.

This sequence belongs to the universal ribosomal protein uL3 family. In terms of assembly, part of the 50S ribosomal subunit. Forms a cluster with proteins L14 and L19. Post-translationally, methylated by PrmB.

Functionally, one of the primary rRNA binding proteins, it binds directly near the 3'-end of the 23S rRNA, where it nucleates assembly of the 50S subunit. In Rickettsia conorii (strain ATCC VR-613 / Malish 7), this protein is Large ribosomal subunit protein uL3.